We begin with the raw amino-acid sequence, 217 residues long: Probable transaldolase (217 aa).

Residue K83 is the Schiff-base intermediate with substrate of the active site.

It belongs to the transaldolase family. Type 3B subfamily.

The protein resides in the cytoplasm. The catalysed reaction is D-sedoheptulose 7-phosphate + D-glyceraldehyde 3-phosphate = D-erythrose 4-phosphate + beta-D-fructose 6-phosphate. The protein operates within carbohydrate degradation; pentose phosphate pathway; D-glyceraldehyde 3-phosphate and beta-D-fructose 6-phosphate from D-ribose 5-phosphate and D-xylulose 5-phosphate (non-oxidative stage): step 2/3. Transaldolase is important for the balance of metabolites in the pentose-phosphate pathway. The polypeptide is Probable transaldolase (Bartonella quintana (strain Toulouse) (Rochalimaea quintana)).